A 461-amino-acid polypeptide reads, in one-letter code: MYDIKWIRDNPEVFDQGRKRRGLEPLAARLLELDDARRGAIAKLQVAQERRNAASKEIGQAMAAKDQAKADALMAEVSALKRDLPELEAAERAAAALLDKALSEIPNLPLEEVPFGRDENDNREHHTFGEKPRFSFDPAEHYELGETLGLMDFETAAKLSGARFVVNKGPLARLERALGAFMLDLHTGEHGYTEVNPPILVRDDAMFGTAQLPKFENDQFWARPGAHPLLIDMFGREEAEEMKKNRLWLIPTAEVPLTNLVRESILDEKQLPLRFTASTPCFRAEAGSAGRDTRGMIRQHQFTKVELVSITTPEQALAEHERMLSCAEEVLKRLKLPYRVVTLCTGDMGFASQKTYDIEVWLPGQDRYREISSVSVCGDFQARRMNARYRPEGAKNTRFVHTLNGSGVAVGRALVAVLENYQTEDGSIIVPDALAPYMGGITRIEKPALERPNSEKPVSRA.

A disordered region spans residues 112–134 (EVPFGRDENDNREHHTFGEKPRF). Over residues 114–134 (PFGRDENDNREHHTFGEKPRF) the composition is skewed to basic and acidic residues. 252–254 (TAE) contributes to the L-serine binding site. Residue 283 to 285 (RAE) coordinates ATP. Residue Glu306 coordinates L-serine. 370-373 (EISS) is an ATP binding site. Ser406 provides a ligand contact to L-serine.

Belongs to the class-II aminoacyl-tRNA synthetase family. Type-1 seryl-tRNA synthetase subfamily. Homodimer. The tRNA molecule binds across the dimer.

The protein resides in the cytoplasm. It catalyses the reaction tRNA(Ser) + L-serine + ATP = L-seryl-tRNA(Ser) + AMP + diphosphate + H(+). It carries out the reaction tRNA(Sec) + L-serine + ATP = L-seryl-tRNA(Sec) + AMP + diphosphate + H(+). Its pathway is aminoacyl-tRNA biosynthesis; selenocysteinyl-tRNA(Sec) biosynthesis; L-seryl-tRNA(Sec) from L-serine and tRNA(Sec): step 1/1. In terms of biological role, catalyzes the attachment of serine to tRNA(Ser). Is also able to aminoacylate tRNA(Sec) with serine, to form the misacylated tRNA L-seryl-tRNA(Sec), which will be further converted into selenocysteinyl-tRNA(Sec). This Methylocella silvestris (strain DSM 15510 / CIP 108128 / LMG 27833 / NCIMB 13906 / BL2) protein is Serine--tRNA ligase.